The chain runs to 268 residues: Embryonic abundant protein VF30.1 (268 aa).

The first 25 residues, 1 to 25 (MEFAHLTVLSLFCLAFVGITATSSG), serve as a signal peptide directing secretion. Positions 68–259 (LFFEHDLHPG…GNKAAAWVPN (192 aa)) constitute a BURP domain. N-linked (GlcNAc...) asparagine glycosylation is present at asparagine 259.

In terms of tissue distribution, seed.

Its subcellular location is the secreted. This Vicia faba (Broad bean) protein is Embryonic abundant protein VF30.1.